Consider the following 538-residue polypeptide: MAAKEVRFHDNARERIVNGVNVLADAVKVTLGPKGRNVLLARSFGAPHITKDGVSVAKEIELKDPFENMGAQMVKEVASKTADVAGDGTTTATVLAQAIVQEGMKYVASGMNPMDLKRGIDKAVHAVIKELQTLSKPVTNSKETAQVAALSANSDEAIGKIIADAMDKVGKEGVITVEDGKSLDNELAVVEGMQFDRGYLSPYFITDPEKQTAVLEDPLVLLYDKKISNIRDLLPVLEQVAKAGKPLLIVAEDVEGEALATLVVNSMRGILKVAAVKAPGFGDRRKAMLEDIAILTGGTVIAEETGLTLEKAGLAELGSAKRVEIGKENTTIIDGAGDKAKIDARVQAIRAQIDAATSDYDREKLQERVAKLSGGVAVIRIGAATEVEMKEKKDRVDDALHATRAAVEEGIVAGGGVALLRARAHIKELKGDNPDQDAGIQIVLRALEAPLRAIAANAGDEPSVIVNKVLEGKGNHGYNAASGQFGDLVEMGVIDPTKVTRTALQNAASIASLILTTDATVAEAGQDSKAKAPAELDY.

ATP is bound by residues 30–33 (TLGP), K51, 87–91 (DGTTT), G415, 479–481 (NAA), and D495.

It belongs to the chaperonin (HSP60) family. As to quaternary structure, forms a cylinder of 14 subunits composed of two heptameric rings stacked back-to-back. Interacts with the co-chaperonin GroES.

It is found in the cytoplasm. It carries out the reaction ATP + H2O + a folded polypeptide = ADP + phosphate + an unfolded polypeptide.. In terms of biological role, together with its co-chaperonin GroES, plays an essential role in assisting protein folding. The GroEL-GroES system forms a nano-cage that allows encapsulation of the non-native substrate proteins and provides a physical environment optimized to promote and accelerate protein folding. This Chromobacterium violaceum (strain ATCC 12472 / DSM 30191 / JCM 1249 / CCUG 213 / NBRC 12614 / NCIMB 9131 / NCTC 9757 / MK) protein is Chaperonin GroEL 1.